The sequence spans 338 residues: Arginase, mitochondrial (338 aa).

Residues 1 to 15 constitute a mitochondrion transit peptide; that stretch reads MSTIARRGFHYMQRL. L-ornithine-binding positions include Ser-73 and 92-95; that span reads DSTN. The Mn(2+) site is built by His-157, Asp-181, His-183, and Asp-185. L-ornithine is bound at residue 185–187; sequence DLY. 191–193 is a substrate binding site; that stretch reads EGN. Residue Ser-220 participates in L-ornithine binding. Residues Asp-266 and Asp-268 each coordinate Mn(2+). Substrate is bound at residue Glu-309.

This sequence belongs to the arginase family. As to quaternary structure, forms homohexamers. It depends on Mn(2+) as a cofactor.

It is found in the mitochondrion. It catalyses the reaction L-arginine + H2O = urea + L-ornithine. The catalysed reaction is agmatine + H2O = urea + putrescine. It functions in the pathway nitrogen metabolism; urea cycle; L-ornithine and urea from L-arginine: step 1/1. Its pathway is amine and polyamine biosynthesis; putrescine biosynthesis via agmatine pathway; putrescine from agmatine: step 1/1. Its function is as follows. Catalyzes the hydrolysis of L-arginine to urea and L-ornithine. The latter can be utilized in the urea cycle or as a precursor for the synthesis of both polyamines and proline. Possesses agmatinase activity. Catalyzes the formation of putrescine from agmatine. This chain is Arginase, mitochondrial, found in Medicago truncatula (Barrel medic).